A 257-amino-acid chain; its full sequence is Alcohol dehydrogenase 1 (257 aa).

NAD(+) is bound at residue 9–33 (VFVGGLGFIAYEACKYLMNNDLASL). Residue Ser137 coordinates substrate. The active-site Proton acceptor is the Tyr150.

It belongs to the short-chain dehydrogenases/reductases (SDR) family. As to quaternary structure, homodimer.

The enzyme catalyses a primary alcohol + NAD(+) = an aldehyde + NADH + H(+). It catalyses the reaction a secondary alcohol + NAD(+) = a ketone + NADH + H(+). In Ceratitis capitata (Mediterranean fruit fly), this protein is Alcohol dehydrogenase 1 (ADH1).